A 220-amino-acid chain; its full sequence is Ribosome assembly protein 3 (220 aa).

Residues 1 to 91 (MSAGDISAIN…VSDVELTDEE (91 aa)) form a disordered region. A compositionally biased stretch (basic residues) spans 13–24 (SVKKNRRRKKRR). Residues 29–39 (SSSDSSSSDPS) show a composition bias toward low complexity. Residues 41–72 (ESEKEEIQNGAIEEHVGENGKSDHVFSKGNDE) are compositionally biased toward basic and acidic residues. Residues 73-91 (DKQEDIAIEVSDVELTDEE) show a composition bias toward acidic residues. At Ser-83 the chain carries Phosphoserine. At Thr-88 the chain carries Phosphothreonine. Ser-99 bears the Phosphoserine mark.

This sequence belongs to the RSA3 family. In terms of assembly, associates with nucleolar pre-ribosomal particles. Interacts with DBP6. Together with DBP6, NOP8, URB1 and URB2, forms an RNA-independent complex, which is required during early maturation of nascent 60S ribosomal subunits.

It is found in the nucleus. The protein resides in the nucleolus. Required for efficient biogenesis of the 60S ribosomal subunit. This is Ribosome assembly protein 3 (RSA3) from Saccharomyces cerevisiae (strain ATCC 204508 / S288c) (Baker's yeast).